The following is a 308-amino-acid chain: Porphobilinogen deaminase (308 aa).

At C240 the chain carries S-(dipyrrolylmethanemethyl)cysteine.

It belongs to the HMBS family. As to quaternary structure, monomer. It depends on dipyrromethane as a cofactor.

It catalyses the reaction 4 porphobilinogen + H2O = hydroxymethylbilane + 4 NH4(+). It functions in the pathway porphyrin-containing compound metabolism; protoporphyrin-IX biosynthesis; coproporphyrinogen-III from 5-aminolevulinate: step 2/4. Its function is as follows. Tetrapolymerization of the monopyrrole PBG into the hydroxymethylbilane pre-uroporphyrinogen in several discrete steps. The protein is Porphobilinogen deaminase of Campylobacter hominis (strain ATCC BAA-381 / DSM 21671 / CCUG 45161 / LMG 19568 / NCTC 13146 / CH001A).